We begin with the raw amino-acid sequence, 677 residues long: Methionine--tRNA ligase (677 aa).

The 'HIGH' region signature appears at 15-25; the sequence is PYANGSIHLGH. Zn(2+) is bound by residues Cys-146, Cys-149, Cys-159, and Cys-162. A 'KMSKS' region motif is present at residues 333-337; the sequence is KMSKS. Lys-336 is a binding site for ATP. In terms of domain architecture, tRNA-binding spans 575–677; sequence DFAKVDLRVA…DGAKPGQQVK (103 aa).

This sequence belongs to the class-I aminoacyl-tRNA synthetase family. MetG type 1 subfamily. Homodimer. Zn(2+) is required as a cofactor.

Its subcellular location is the cytoplasm. The enzyme catalyses tRNA(Met) + L-methionine + ATP = L-methionyl-tRNA(Met) + AMP + diphosphate. Functionally, is required not only for elongation of protein synthesis but also for the initiation of all mRNA translation through initiator tRNA(fMet) aminoacylation. This is Methionine--tRNA ligase from Salmonella arizonae (strain ATCC BAA-731 / CDC346-86 / RSK2980).